The primary structure comprises 688 residues: Phosphoinositide 3-phosphatase (688 aa).

Residues 155-637 (SWDIYDPIKE…KKVQWWWQLY (483 aa)) form the Myotubularin phosphatase domain. Residue Cys-397 is the Phosphocysteine intermediate of the active site. Basic and acidic residues predominate over residues 647–668 (ELRHKRDSVPISVDKKSKEHSN). The interval 647–672 (ELRHKRDSVPISVDKKSKEHSNSDGG) is disordered.

Belongs to the protein-tyrosine phosphatase family. Non-receptor class myotubularin subfamily.

Its subcellular location is the cytoplasm. It carries out the reaction a 1,2-diacyl-sn-glycero-3-phospho-(1D-myo-inositol-3-phosphate) + H2O = a 1,2-diacyl-sn-glycero-3-phospho-(1D-myo-inositol) + phosphate. Lipid phosphatase which dephosphorylates phosphatidylinositol 3-monophosphate (PI3P). Involved in the control of PI3P-dependent signaling and in the maintenance of endosomal system integrity. The chain is Phosphoinositide 3-phosphatase from Saccharomyces cerevisiae (strain ATCC 204508 / S288c) (Baker's yeast).